The sequence spans 1141 residues: IgM protease (1141 aa).

The N-terminal stretch at 1 to 32 (MNIQERFSLRKSAVGLVSVSLLCAIYTSTVAA) is a signal peptide. The active-site Nucleophile is the C195. Disordered stretches follow at residues 518-544 (PDLP…STNL), 725-749 (EKDS…NVET), 781-805 (LEKD…TNVE), and 839-860 (EKDS…ESTS). Residues 526 to 544 (STVSDVDSLSSQETSSTNL) are compositionally biased toward polar residues. Low complexity-rich tracts occupy residues 738–749 (EPTSSESTNVET) and 795–805 (EPTSSESTNVE). A helical membrane pass occupies residues 1119–1136 (IMGVGLLTLVLGSALGLL).

The protein belongs to the peptidase C66 family.

The protein resides in the cell membrane. The protein localises to the secreted. IgM cleavage is inhibited by iodoacetamide but not by AEBSF, bestatin, E-64, Z-LVG-CHN(2), or EDTA. Catalyzes the specific cleavage of porcine IgM bound to the bacterial surface. Can degrade only IgM but neither IgG nor IgA, and is host specific, as it exclusively cleaves porcine IgM but not IgM from six other species, including human, mouse and a closely related member of the Suidae family. Promotes survival in porcine blood. Is thus involved in a so-far-unknown mechanism of host-pathogen interaction at an early stage of the host immune response. In Streptococcus suis (strain P1/7), this protein is IgM protease (ide).